A 246-amino-acid polypeptide reads, in one-letter code: DNA repair protein RecO (246 aa).

It belongs to the RecO family.

Involved in DNA repair and RecF pathway recombination. The chain is DNA repair protein RecO from Cutibacterium acnes (strain DSM 16379 / KPA171202) (Propionibacterium acnes).